We begin with the raw amino-acid sequence, 69 residues long: Sec-independent protein translocase protein TatA (69 aa).

The chain crosses the membrane as a helical span at residues 1–21 (MFGLGGQELVLILLIVLLLFG). Residues 47–63 (EEEFNKSMDDNPKKEKA) show a composition bias toward basic and acidic residues. The tract at residues 47–69 (EEEFNKSMDDNPKKEKATTASKS) is disordered.

This sequence belongs to the TatA/E family. In terms of assembly, forms a complex with TatC.

It localises to the cell inner membrane. Its function is as follows. Part of the twin-arginine translocation (Tat) system that transports large folded proteins containing a characteristic twin-arginine motif in their signal peptide across membranes. TatA could form the protein-conducting channel of the Tat system. The protein is Sec-independent protein translocase protein TatA of Chlorobium chlorochromatii (strain CaD3).